Reading from the N-terminus, the 360-residue chain is Photosystem II protein D1 (360 aa).

Helical transmembrane passes span 29–46, 118–133, and 142–156; these read YIGWFGVLMIPTLVSAIA, HFLIGVACYLGREWEL, and WICVAFSAPVAAATA. Residue H118 participates in chlorophyll a binding. Y126 contributes to the pheophytin a binding site. D170 and E189 together coordinate [CaMn4O5] cluster. The chain crosses the membrane as a helical span at residues 197-218; sequence FHMLGVAGVFGGSLFSAMHGSL. H198 serves as a coordination point for chlorophyll a. A quinone is bound by residues H215 and 264–265; that span reads SF. H215 is a binding site for Fe cation. H272 provides a ligand contact to Fe cation. A helical transmembrane segment spans residues 274–288; it reads FLAAWPVIGIWFTAL. Residues H332, E333, D342, and A344 each coordinate [CaMn4O5] cluster. Positions 345 to 360 are excised as a propeptide; the sequence is AGDVAPVALTAPPING.

It belongs to the reaction center PufL/M/PsbA/D family. PSII is composed of 1 copy each of membrane proteins PsbA, PsbB, PsbC, PsbD, PsbE, PsbF, PsbH, PsbI, PsbJ, PsbK, PsbL, PsbM, PsbT, PsbX, PsbY, PsbZ, Psb30/Ycf12, peripheral proteins PsbO, CyanoQ (PsbQ), PsbU, PsbV and a large number of cofactors. It forms dimeric complexes. It depends on The D1/D2 heterodimer binds P680, chlorophylls that are the primary electron donor of PSII, and subsequent electron acceptors. It shares a non-heme iron and each subunit binds pheophytin, quinone, additional chlorophylls, carotenoids and lipids. D1 provides most of the ligands for the Mn4-Ca-O5 cluster of the oxygen-evolving complex (OEC). There is also a Cl(-1) ion associated with D1 and D2, which is required for oxygen evolution. The PSII complex binds additional chlorophylls, carotenoids and specific lipids. as a cofactor. Post-translationally, tyr-161 forms a radical intermediate that is referred to as redox-active TyrZ, YZ or Y-Z. In terms of processing, C-terminally processed by CtpA; processing is essential to allow assembly of the oxygen-evolving complex and thus photosynthetic growth.

It is found in the cellular thylakoid membrane. It carries out the reaction 2 a plastoquinone + 4 hnu + 2 H2O = 2 a plastoquinol + O2. Photosystem II (PSII) is a light-driven water:plastoquinone oxidoreductase that uses light energy to abstract electrons from H(2)O, generating O(2) and a proton gradient subsequently used for ATP formation. It consists of a core antenna complex that captures photons, and an electron transfer chain that converts photonic excitation into a charge separation. The D1/D2 (PsbA/PsbD) reaction center heterodimer binds P680, the primary electron donor of PSII as well as several subsequent electron acceptors. This Trichormus azollae (Anabaena azollae) protein is Photosystem II protein D1.